The following is a 275-amino-acid chain: MERLAPAKVNLGLSVRFRREDGYHELHTLFAPFSLADRLVVEPVSSGLHFQGPYGRENLAYRAASLYLEAAGQPGGVRILLEKRIPEGAGLGGGSSDAAQVLLALQALYPAEVDLFALARTLGADVPFFLLGRGAEARGVGERLKPLALPPVPAVVFFPGLRVPTPLVYRAVRPEDFGPDLPVEAILEALARGEEPPYWNSLEGPAFRLFPELKEVRGRMRALGLRGVLMSGSGSAFFGLAEGPDHARRAAEALRAWGRAWAGTLGGGDAGSGPA.

The active site involves Lys8. 86–96 (PEGAGLGGGSS) contacts ATP. The active site involves Asp125.

Belongs to the GHMP kinase family. IspE subfamily.

It catalyses the reaction 4-CDP-2-C-methyl-D-erythritol + ATP = 4-CDP-2-C-methyl-D-erythritol 2-phosphate + ADP + H(+). It participates in isoprenoid biosynthesis; isopentenyl diphosphate biosynthesis via DXP pathway; isopentenyl diphosphate from 1-deoxy-D-xylulose 5-phosphate: step 3/6. In terms of biological role, catalyzes the phosphorylation of the position 2 hydroxy group of 4-diphosphocytidyl-2C-methyl-D-erythritol. The chain is 4-diphosphocytidyl-2-C-methyl-D-erythritol kinase from Thermus thermophilus (strain ATCC BAA-163 / DSM 7039 / HB27).